The chain runs to 650 residues: MSTRVETLEFQAEARQLLQLMVHSIYSNKDIFLRELISNASDALDKLRIASLVKDGPRVDSADLRIEIEADVNARTLTVRDNGIGMSRDEVVGLIGTIAKSGTAELLRKLRESEDGAASSDLIGQFGVGFYSTFMVADKVTLLTGKAGESGGTRWESDGAGTYVIETVDDAPRGTAVTVHLKPEDSEDRLYDYTDENKIREIVKRYSDFIAWPIRLVSAPAAKDRDSNDDGTAESGAGAENAGDRPLNSMKALWARPQSEVDKAEYDQFYQHLSHDWTGPLEVIHMKGEGTFEYEALLFIPSRAPLDLFTRDARRGVQLYVKRVFIMDDCAELLPNYLRFVRGVVDTHDLSLNISREILQQDRRIQLVRRRLVKKILASIRALQENDAERYRTLWKEFGAALKEGLLEDADNQDAILGLVSVDSTHDADRPTTLREYIERMKDAQNEIYYLTGDSRGMIENSPHMEAFRAKGYEVLILTDPVDEVWVERVAEFDGKPLKSIAKGEVDLDTDDEKKSSEAEREQLRKDFAALLPWLAAKLEDDVKEVRLSSRLTTSPACLVGDTFDMTPALEKMYRAMGHEMPRPKRILELNPTHALVMGLRAAHERDADSAALGDTAELLYGMALLAEGGELRDPARFTRLLAERLAEAL.

The a; substrate-binding stretch occupies residues 1–356 (MSTRVETLEF…THDLSLNISR (356 aa)). The segment at 222–245 (AKDRDSNDDGTAESGAGAENAGDR) is disordered. The tract at residues 357-572 (EILQQDRRIQ…TFDMTPALEK (216 aa)) is b. The segment at 573-650 (MYRAMGHEMP…LLAERLAEAL (78 aa)) is c.

This sequence belongs to the heat shock protein 90 family. In terms of assembly, homodimer.

The protein localises to the cytoplasm. Molecular chaperone. Has ATPase activity. In Frankia casuarinae (strain DSM 45818 / CECT 9043 / HFP020203 / CcI3), this protein is Chaperone protein HtpG.